A 194-amino-acid polypeptide reads, in one-letter code: Putative lipoprotein LppK (194 aa).

Residues 1 to 26 (MSRWTHRTFFIALSAIVTTAGFGSSG) form the signal peptide. Cys-27 carries the N-palmitoyl cysteine lipid modification. Residue Cys-27 is the site of S-diacylglycerol cysteine attachment. The tract at residues 174 to 194 (GNSSGLTNPAPIKAPTPTPSH) is disordered. Residues 185-194 (IKAPTPTPSH) show a composition bias toward pro residues.

Belongs to the MTB12 family.

The protein resides in the cell membrane. The sequence is that of Putative lipoprotein LppK (lppK) from Mycobacterium leprae (strain TN).